A 130-amino-acid polypeptide reads, in one-letter code: Small ribosomal subunit protein uS11 (130 aa).

It belongs to the universal ribosomal protein uS11 family. Part of the 30S ribosomal subunit. Interacts with proteins S7 and S18. Binds to IF-3.

Functionally, located on the platform of the 30S subunit, it bridges several disparate RNA helices of the 16S rRNA. Forms part of the Shine-Dalgarno cleft in the 70S ribosome. The protein is Small ribosomal subunit protein uS11 of Synechococcus sp. (strain CC9902).